The primary structure comprises 396 residues: Phosphoglycerate kinase (396 aa).

Substrate-binding positions include 21–23 (DFN), Arg36, 59–62 (HLGK), Arg119, and Arg156. ATP-binding positions include Lys206, Glu325, and 352-355 (GGDS).

It belongs to the phosphoglycerate kinase family. Monomer.

It localises to the cytoplasm. The enzyme catalyses (2R)-3-phosphoglycerate + ATP = (2R)-3-phospho-glyceroyl phosphate + ADP. It participates in carbohydrate degradation; glycolysis; pyruvate from D-glyceraldehyde 3-phosphate: step 2/5. This is Phosphoglycerate kinase from Macrococcus caseolyticus (strain JCSC5402) (Macrococcoides caseolyticum).